The sequence spans 367 residues: ELAV-like protein 3 (367 aa).

RRM domains lie at 39-117 (TNLI…YARP), 125-205 (ANLY…FANN), and 284-362 (WCIF…FKTS).

It belongs to the RRM elav family. Interacts with MAP1B light chain LC1. In terms of tissue distribution, brain specific. Expressed in the hippocampus with expression in CA1, CA3 and dentate gyrus.

RNA-binding protein that binds to AU-rich element (ARE) sequences of target mRNAs, including VEGF mRNA. May also bind poly-A tracts via RRM 3. May be involved in neuronal differentiation and maintenance. Plays a role in the stabilization of GAP43 mRNA and in spatial learning. The chain is ELAV-like protein 3 (Elavl3) from Mus musculus (Mouse).